A 748-amino-acid chain; its full sequence is Methylmalonyl-CoA mutase, mitochondrial (748 aa).

Residues 1-30 constitute a mitochondrion transit peptide; that stretch reads MLRAKNQLFLLSPHYLKQLNIPSASRWKRL. Q48 provides a ligand contact to malonyl-CoA. K87 carries the post-translational modification N6-acetyllysine. Malonyl-CoA contacts are provided by residues 94 to 97 and 104 to 108; these read YPTM and TIRQY. K210 is subject to N6-acetyllysine. Residues 214–216, R226, K253, H263, and 302–304 contribute to the malonyl-CoA site; these read TIQ and RLS. K333 is modified (N6-acetyllysine). N6-succinyllysine is present on K341. A Phosphoserine modification is found at S479. N6-succinyllysine is present on K593. K600 is subject to N6-acetyllysine. One can recognise a B12-binding domain in the interval 612-744; that stretch reads RPRLLVAKMG…DDIEKCLAEK (133 aa). An adenosylcob(III)alamin-binding site is contributed by H625.

Belongs to the methylmalonyl-CoA mutase family. In terms of assembly, homodimer. Interacts (the apoenzyme form) with MMAA; the interaction is GTP dependent. It depends on adenosylcob(III)alamin as a cofactor.

The protein resides in the mitochondrion matrix. Its subcellular location is the mitochondrion. The protein localises to the cytoplasm. It catalyses the reaction (R)-methylmalonyl-CoA = succinyl-CoA. Its activity is regulated as follows. Inhibited by itaconyl-CoA, a metabolite that inactivates the coenzyme B12 cofactor. Functionally, catalyzes the reversible isomerization of methylmalonyl-CoA (MMCoA) (generated from branched-chain amino acid metabolism and degradation of dietary odd chain fatty acids and cholesterol) to succinyl-CoA (3-carboxypropionyl-CoA), a key intermediate of the tricarboxylic acid cycle. The polypeptide is Methylmalonyl-CoA mutase, mitochondrial (Mmut) (Mus musculus (Mouse)).